Consider the following 872-residue polypeptide: Leucine--tRNA ligase (872 aa).

A 'HIGH' region motif is present at residues 42-52 (PYPSGKLHMGH). Residues 632-636 (KMSKS) carry the 'KMSKS' region motif. Residue Lys635 participates in ATP binding.

It belongs to the class-I aminoacyl-tRNA synthetase family.

The protein localises to the cytoplasm. The enzyme catalyses tRNA(Leu) + L-leucine + ATP = L-leucyl-tRNA(Leu) + AMP + diphosphate. In Chromobacterium violaceum (strain ATCC 12472 / DSM 30191 / JCM 1249 / CCUG 213 / NBRC 12614 / NCIMB 9131 / NCTC 9757 / MK), this protein is Leucine--tRNA ligase.